The following is a 264-amino-acid chain: Glutamate racemase (264 aa).

Substrate is bound by residues 11–12 and 43–44; these read DS and YG. Residue cysteine 74 is the Proton donor/acceptor of the active site. 75–76 contacts substrate; it reads NT. Cysteine 193 functions as the Proton donor/acceptor in the catalytic mechanism. Substrate is bound at residue 194 to 195; sequence TH.

Belongs to the aspartate/glutamate racemases family.

The enzyme catalyses L-glutamate = D-glutamate. It participates in cell wall biogenesis; peptidoglycan biosynthesis. Provides the (R)-glutamate required for cell wall biosynthesis. This chain is Glutamate racemase, found in Bifidobacterium longum (strain DJO10A).